A 70-amino-acid polypeptide reads, in one-letter code: MRSIISLILISAMVFSMIAPVPEEERLQLSEDERGGCLPHNRFCNALTGPRCCSRLRCKELSIWDSICLG.

The signal sequence occupies residues 1 to 20; that stretch reads MRSIISLILISAMVFSMIAP. A propeptide spanning residues 21-34 is cleaved from the precursor; that stretch reads VPEEERLQLSEDER. Disulfide bonds link Cys37/Cys53, Cys44/Cys58, and Cys52/Cys68. Residue Leu69 is modified to Leucine amide.

Belongs to the neurotoxin 01 (U2-agtx) family. Expressed by the venom gland.

It localises to the secreted. Functionally, insect active toxin causing rapid but reversible paralysis in crickets. No activity shown in mammals. Does not show effect on mammalian voltage-gated calcium channels. The polypeptide is U2-agatoxin-Ao1r (Agelena orientalis (Funnel-web spider)).